A 572-amino-acid polypeptide reads, in one-letter code: Nucleolin 1 (572 aa).

2 disordered regions span residues 1–312 (MGKA…ESAT) and 488–572 (DEAK…FGDE). A compositionally biased stretch (low complexity) spans 7–21 (KSVAVAVAPAAVPAK). Over residues 27–38 (KREAEDEIEKAV) the composition is skewed to basic and acidic residues. 2 stretches are compositionally biased toward low complexity: residues 45 to 58 (AAAA…PAPK) and 72 to 81 (KAASSSSGSS). 7 stretches are compositionally biased toward acidic residues: residues 82–91 (SEEDSSESEE), 109–122 (SSDE…DDED), 144–156 (SESD…DEDE), 177–191 (DSSE…SDED), 208–222 (STDG…EDED), 235–247 (SDEE…ESSD), and 261–276 (ESSE…EEDE). The segment covering 300 to 311 (PASNQSQGTESA) has biased composition (polar residues). 2 RRM domains span residues 311 to 387 (ATLF…LAHE) and 411 to 492 (QSIF…EAKP). 2 stretches are compositionally biased toward basic and acidic residues: residues 488 to 520 (DEAK…DRFG) and 528 to 545 (GGRD…DGGR). Positions 553–566 (QSRQSAGTASTGKK) are enriched in polar residues.

Its subcellular location is the nucleus. It is found in the nucleolus. Involved in pre-rRNA processing and ribosome assembly. This Oryza sativa subsp. japonica (Rice) protein is Nucleolin 1.